The sequence spans 402 residues: Speedy protein E21 (402 aa).

Positions 1–90 (MDRTETRFRK…EPEKELAPEP (90 aa)) are disordered. The span at 16 to 39 (GKITTSRQLHPQNEQSPQRSTSGY) shows a compositional bias: polar residues. Residues 76–90 (DESEEEPEKELAPEP) are compositionally biased toward acidic residues.

Belongs to the Speedy/Ringo family.

This chain is Speedy protein E21, found in Homo sapiens (Human).